The chain runs to 360 residues: Amine dehydrogenase (360 aa).

It belongs to the amine dehydrogenase family. In terms of assembly, homodimer.

The catalysed reaction is a secondary alkyl amine + NAD(+) + H2O = a ketone + NH4(+) + NADH + H(+). It catalyses the reaction a secondary alkyl amine + NADP(+) + H2O = a ketone + NH4(+) + NADPH + H(+). It carries out the reaction serinol + NAD(+) + H2O = dihydroxyacetone + NH4(+) + NADH + H(+). The enzyme catalyses serinol + NADP(+) + H2O = dihydroxyacetone + NH4(+) + NADPH + H(+). The catalysed reaction is 2-aminopropan-1-ol + NAD(+) + H2O = hydroxyacetone + NH4(+) + NADH + H(+). It catalyses the reaction (R)-1-phenylethylamine + NAD(+) + H2O = acetophenone + NH4(+) + NADH + H(+). It carries out the reaction (S)-1-phenylethylamine + NAD(+) + H2O = acetophenone + NH4(+) + NADH + H(+). The enzyme catalyses (2S)-2-aminobutan-1-ol + NAD(+) + H2O = 1-hydroxy-2-butanone + NH4(+) + NADH + H(+). The catalysed reaction is (2S)-2-amino-3-methylbutan-1-ol + NAD(+) + H2O = 1-hydroxy-3-methylbutan-2-one + NH4(+) + NADH + H(+). It catalyses the reaction 2-aminopentan-1-ol + NAD(+) + H2O = 1-hydroxypentan-2-one + NH4(+) + NADH + H(+). It carries out the reaction (S)-leucinol + NAD(+) + H2O = 1-hydroxy-4-methylpentan-2-one + NH4(+) + NADH + H(+). The enzyme catalyses (S)-isoleucinol + NAD(+) + H2O = (3S)-1-hydroxy-3-methylpentan-2-one + NH4(+) + NADH + H(+). The catalysed reaction is (S)-methioninol + NAD(+) + H2O = 1-hydroxy-4-(methythio)butan-2-one + NH4(+) + NADH + H(+). It catalyses the reaction 2-aminocyclohexanol + NAD(+) + H2O = 2-hydroxycyclohexan-1-one + NH4(+) + NADH + H(+). It carries out the reaction L-alanine + NAD(+) + H2O = pyruvate + NH4(+) + NADH + H(+). The enzyme catalyses D-alanine + NAD(+) + H2O = pyruvate + NH4(+) + NADH + H(+). The catalysed reaction is L-aspartate + NAD(+) + H2O = oxaloacetate + NH4(+) + NADH + H(+). It catalyses the reaction D-aspartate + NAD(+) + H2O = oxaloacetate + NH4(+) + NADH + H(+). It carries out the reaction L-glutamate + NAD(+) + H2O = 2-oxoglutarate + NH4(+) + NADH + H(+). The enzyme catalyses D-glutamate + NAD(+) + H2O = 2-oxoglutarate + NH4(+) + NADH + H(+). The catalysed reaction is L-serine + NAD(+) + H2O = 3-hydroxypyruvate + NH4(+) + NADH + H(+). It catalyses the reaction D-serine + NAD(+) + H2O = 3-hydroxypyruvate + NH4(+) + NADH + H(+). It carries out the reaction methylamine + NAD(+) + H2O = formaldehyde + NH4(+) + NADH + H(+). The enzyme catalyses ethylamine + NAD(+) + H2O = acetaldehyde + NH4(+) + NADH + H(+). The catalysed reaction is propylamine + NAD(+) + H2O = propanal + NH4(+) + NADH + H(+). It catalyses the reaction butylamine + NAD(+) + H2O = butanal + NH4(+) + NADH + H(+). It carries out the reaction hexylamine + NAD(+) + H2O = hexanal + NH4(+) + NADH + H(+). The enzyme catalyses octylamine + NAD(+) + H2O = octanal + NH4(+) + NADH + H(+). The catalysed reaction is (R)-sec-butylamine + NAD(+) + H2O = butan-2-one + NH4(+) + NADH + H(+). It catalyses the reaction (S)-sec-butylamine + NAD(+) + H2O = butan-2-one + NH4(+) + NADH + H(+). It carries out the reaction 2-aminopentane + NAD(+) + H2O = pentan-2-one + NH4(+) + NADH + H(+). The enzyme catalyses 3-aminopentane + NAD(+) + H2O = pentan-3-one + NH4(+) + NADH + H(+). The catalysed reaction is (2R)-heptan-2-amine + NAD(+) + H2O = heptan-2-one + NH4(+) + NADH + H(+). It catalyses the reaction (2S)-heptan-2-amine + NAD(+) + H2O = heptan-2-one + NH4(+) + NADH + H(+). It carries out the reaction benzylamine + NAD(+) + H2O = benzaldehyde + NH4(+) + NADH + H(+). The enzyme catalyses 3-aminobutan-2-ol + NAD(+) + H2O = acetoin + NH4(+) + NADH + H(+). The catalysed reaction is 3-aminobutan-1-ol + NAD(+) + H2O = 4-hydroxybutan-2-one + NH4(+) + NADH + H(+). It catalyses the reaction 5-hydroxypentan-2-amine + NAD(+) + H2O = 5-hydroxypentan-2-one + NH4(+) + NADH + H(+). It carries out the reaction 4-hydroxyhexan-3-amine + NAD(+) + H2O = 4-hydroxyhexan-3-one + NH4(+) + NADH + H(+). The enzyme catalyses 5-hydroxyoctan-4-amine + NAD(+) + H2O = 5-hydroxyoctan-4-one + NH4(+) + NADH + H(+). The catalysed reaction is 2-hydroxy-1-phenylethan-1-amine + NAD(+) + H2O = 2-hydroxyacetophenone + NH4(+) + NADH + H(+). It catalyses the reaction hexan-2-amine + NAD(+) + H2O = hexan-2-one + NH4(+) + NADH + H(+). It carries out the reaction 4-phenylbutan-2-amine + NAD(+) + H2O = 4-phenylbutan-2-one + NH4(+) + NADH + H(+). Its function is as follows. Catalyzes the reversible oxidative deaminations of a broad range of amines, amino alcohols and amino acids. Catalyzes the reversible dehydrogenation of serinol in the presence of NAD(+) to give dihydroxyacetone, ammonium ion and NADH, while NADP(+) shows a slight activity. Is also able to produce 2-amino-1-propanol and aspartate by the reductive amination of the corresponding keto alcohol (hydroxyacetone) and keto acid (oxaloacetate) in the presence of ammonium ions and NADH, and that of acetophenone from phenylethylamine by the oxidative deamination in the presence of NAD(+). The chain is Amine dehydrogenase from Streptomyces virginiae (Streptomyces cinnamonensis).